An 85-amino-acid chain; its full sequence is Large ribosomal subunit protein bL27 (85 aa).

A disordered region spans residues 1–21 (MAHKKGGGTTRNGRDSESKRL).

It belongs to the bacterial ribosomal protein bL27 family.

This is Large ribosomal subunit protein bL27 from Janthinobacterium sp. (strain Marseille) (Minibacterium massiliensis).